A 409-amino-acid chain; its full sequence is Broad specificity amino-acid racemase (409 aa).

The N-terminal stretch at 1 to 24 (MPFRRTLLAASLALLITGQAPLYA) is a signal peptide. A disulfide bridge connects residues cysteine 71 and cysteine 97. Residue lysine 75 is the Proton acceptor of the active site. Lysine 75 bears the N6-(pyridoxal phosphate)lysine mark. Arginine 174 is a binding site for substrate. The active-site Proton acceptor is the tyrosine 301. Methionine 349 serves as a coordination point for substrate.

This sequence belongs to the alanine racemase family. Bsr subfamily. The cofactor is pyridoxal 5'-phosphate.

The protein resides in the periplasm. The catalysed reaction is an L-alpha-amino acid = a D-alpha-amino acid. It catalyses the reaction L-lysine = D-lysine. The enzyme catalyses L-arginine = D-arginine. It carries out the reaction L-glutamine = D-glutamine. In terms of biological role, amino-acid racemase able to utilize a broad range of substrates. Reversibly racemizes 9 of the 19 natural chiral amino acids known, including both positively charged amino acids (Lys, Arg and His) and non-beta-branched aliphatic amino acids (Ala, Leu, Met, Ser, Gln and Asn). Among these amino acids, activity is the highest with lysine and arginine, and poor or very poor with the others. Plays a primary role in the catabolism of basic amino acid, that allows P.putida strain KT2440 to grow on L-Lys and L-Arg as the sole source of carbon and nitrogen, through conversion to their respective D-enantiomers. The chain is Broad specificity amino-acid racemase from Pseudomonas putida (strain ATCC 47054 / DSM 6125 / CFBP 8728 / NCIMB 11950 / KT2440).